A 218-amino-acid chain; its full sequence is MNLASISQSYMSHNENERSIVPYIPPPYHPTAPALAVSASQMETMSLGILNQAMSSSAGASGALKDEKAAFGAVAEALRDPEPIRKIKRQVGIQTLKTLKVELSGMRRKKLILKIIMFICANVTMATSLVGGMSIVDEDIAKHLAFDGKGDWVSKTVHGLNLLCTTMLLAANKISEKVREEIARTKRDIAKRQSYVSAATMSWDGDSVTLLRDVKCGD.

This sequence belongs to the orbivirus NS3 family.

Functionally, may play a role in the release of virions from infected cells. This is Non-structural protein NS3 (Segment-10) from Camelus dromedarius (Dromedary).